Here is a 365-residue protein sequence, read N- to C-terminus: tRNA/tmRNA (uracil-C(5))-methyltransferase (365 aa).

S-adenosyl-L-methionine is bound by residues Gln-189, Tyr-217, Asn-222, Glu-238, and Asp-298. The active-site Nucleophile is the Cys-323. Glu-357 (proton acceptor) is an active-site residue.

It belongs to the class I-like SAM-binding methyltransferase superfamily. RNA M5U methyltransferase family. TrmA subfamily.

The enzyme catalyses uridine(54) in tRNA + S-adenosyl-L-methionine = 5-methyluridine(54) in tRNA + S-adenosyl-L-homocysteine + H(+). It carries out the reaction uridine(341) in tmRNA + S-adenosyl-L-methionine = 5-methyluridine(341) in tmRNA + S-adenosyl-L-homocysteine + H(+). Dual-specificity methyltransferase that catalyzes the formation of 5-methyluridine at position 54 (m5U54) in all tRNAs, and that of position 341 (m5U341) in tmRNA (transfer-mRNA). This Shewanella loihica (strain ATCC BAA-1088 / PV-4) protein is tRNA/tmRNA (uracil-C(5))-methyltransferase.